The chain runs to 171 residues: Transcription factor E (171 aa).

Positions 5-88 constitute an HTH TFE/IIEalpha-type domain; the sequence is YEDPFIRIAV…RWRSRREEVE (84 aa).

It belongs to the TFE family. Monomer. Interaction with RNA polymerase subunits RpoF and RpoE is necessary for Tfe stimulatory transcription activity. Able to interact with Tbp and RNA polymerase in the absence of DNA promoter. Interacts both with the preinitiation and elongation complexes.

Transcription factor that plays a role in the activation of archaeal genes transcribed by RNA polymerase. Facilitates transcription initiation by enhancing TATA-box recognition by TATA-box-binding protein (Tbp), and transcription factor B (Tfb) and RNA polymerase recruitment. Not absolutely required for transcription in vitro, but particularly important in cases where Tbp or Tfb function is not optimal. It dynamically alters the nucleic acid-binding properties of RNA polymerases by stabilizing the initiation complex and destabilizing elongation complexes. Seems to translocate with the RNA polymerase following initiation and acts by binding to the non template strand of the transcription bubble in elongation complexes. The protein is Transcription factor E of Cenarchaeum symbiosum (strain A).